Consider the following 1216-residue polypeptide: Coatomer subunit alpha-1 (1216 aa).

WD repeat units follow at residues 7–48 (TKSN…DRFD), 49–88 (EHEG…CLFT), 91–132 (GHLD…SVLT), 133–172 (GHNH…KKTV), 202–241 (GHDR…AWEV), 246–285 (GHMN…GLQT), 288–326 (REHD…PAFA), and 363–404 (SLNQ…VGRS).

In terms of assembly, oligomeric complex that consists of at least the alpha, beta, beta', gamma, delta, epsilon and zeta subunits.

It is found in the cytoplasm. It localises to the golgi apparatus membrane. Its subcellular location is the cytoplasmic vesicle. The protein localises to the COPI-coated vesicle membrane. Functionally, the coatomer is a cytosolic protein complex that binds to dilysine motifs and reversibly associates with Golgi non-clathrin-coated vesicles, which further mediate biosynthetic protein transport from the ER, via the Golgi up to the trans Golgi network. Coatomer complex is required for budding from Golgi membranes, and is essential for the retrograde Golgi-to-ER transport of dilysine-tagged proteins. In Arabidopsis thaliana (Mouse-ear cress), this protein is Coatomer subunit alpha-1.